A 353-amino-acid chain; its full sequence is Photosystem II protein D1 (353 aa).

Thr-2 is modified (N-acetylthreonine). Thr-2 bears the Phosphothreonine mark. 3 helical membrane-spanning segments follow: residues 29-46 (YIGW…TATS), 118-133 (HFLL…EWEL), and 142-156 (WIAV…AATA). Chlorophyll a is bound at residue His-118. Position 126 (Tyr-126) interacts with pheophytin a. Asp-170 and Glu-189 together coordinate [CaMn4O5] cluster. The chain crosses the membrane as a helical span at residues 197-218 (FHMLGVAGVFGGSLFSAMHGSL). His-198 is a chlorophyll a binding site. A quinone is bound by residues His-215 and 264 to 265 (SF). His-215 is a Fe cation binding site. Residue His-272 coordinates Fe cation. Residues 274 to 288 (FLAAWPVVGIWFTAL) traverse the membrane as a helical segment. [CaMn4O5] cluster-binding residues include His-332, Glu-333, Asp-342, and Ala-344. The propeptide occupies 345 to 353 (SVELDSIDG).

Belongs to the reaction center PufL/M/PsbA/D family. In terms of assembly, PSII is composed of 1 copy each of membrane proteins PsbA, PsbB, PsbC, PsbD, PsbE, PsbF, PsbH, PsbI, PsbJ, PsbK, PsbL, PsbM, PsbT, PsbX, PsbY, PsbZ, Psb30/Ycf12, at least 3 peripheral proteins of the oxygen-evolving complex and a large number of cofactors. It forms dimeric complexes. The D1/D2 heterodimer binds P680, chlorophylls that are the primary electron donor of PSII, and subsequent electron acceptors. It shares a non-heme iron and each subunit binds pheophytin, quinone, additional chlorophylls, carotenoids and lipids. D1 provides most of the ligands for the Mn4-Ca-O5 cluster of the oxygen-evolving complex (OEC). There is also a Cl(-1) ion associated with D1 and D2, which is required for oxygen evolution. The PSII complex binds additional chlorophylls, carotenoids and specific lipids. serves as cofactor. In terms of processing, tyr-161 forms a radical intermediate that is referred to as redox-active TyrZ, YZ or Y-Z. C-terminally processed by CTPA; processing is essential to allow assembly of the oxygen-evolving complex and thus photosynthetic growth.

Its subcellular location is the plastid. It localises to the chloroplast thylakoid membrane. The catalysed reaction is 2 a plastoquinone + 4 hnu + 2 H2O = 2 a plastoquinol + O2. Its function is as follows. Photosystem II (PSII) is a light-driven water:plastoquinone oxidoreductase that uses light energy to abstract electrons from H(2)O, generating O(2) and a proton gradient subsequently used for ATP formation. It consists of a core antenna complex that captures photons, and an electron transfer chain that converts photonic excitation into a charge separation. The D1/D2 (PsbA/PsbD) reaction center heterodimer binds P680, the primary electron donor of PSII as well as several subsequent electron acceptors. This Gnetum parvifolium (Small-leaved jointfir) protein is Photosystem II protein D1.